Consider the following 160-residue polypeptide: Flavodoxin (160 aa).

The Flavodoxin-like domain occupies 3–153 (ISILYSSKTG…NARIFGERIA (151 aa)).

Belongs to the flavodoxin family. It depends on FMN as a cofactor.

Functionally, low-potential electron donor to a number of redox enzymes. This is Flavodoxin (floX) from Clostridium saccharobutylicum.